A 184-amino-acid polypeptide reads, in one-letter code: Succinate dehydrogenase cytochrome b560 subunit, mitochondrial (184 aa).

A helical membrane pass occupies residues 65–94; that stretch reads LTWMLSGFHRISGCVMAGTLLVGGLGFAVL. At 95–114 the chain is on the mitochondrial intermembrane side; sequence PLDFTTFVEYIRGWNLPCAV. The chain crosses the membrane as a helical span at residues 115–139; it reads TAVFKYIIAFPIIFHTLNGIRFLGF. His-129 is a heme binding site. At 140–147 the chain is on the mitochondrial matrix side; it reads DLAKGVDN. The helical transmembrane segment at 148-169 threads the bilayer; sequence IGQVYKSGWLVFGVSAVIALAI. Residues 170-172 are Mitochondrial intermembrane-facing; sequence VIN.

Belongs to the cytochrome b560 family. Component of complex II composed of four subunits: a flavoprotein (FP), iron-sulfur protein (IP), and a cytochrome b560 composed of two transmembrane proteins. Requires heme as cofactor.

Its subcellular location is the mitochondrion inner membrane. The protein operates within carbohydrate metabolism; tricarboxylic acid cycle. Membrane-anchoring subunit of succinate dehydrogenase (SDH) that is involved in complex II of the mitochondrial electron transport chain and is responsible for transferring electrons from succinate to ubiquinone (coenzyme Q). Mediates resistance to enteropathogenic E.coli infection. This is Succinate dehydrogenase cytochrome b560 subunit, mitochondrial (mev-1) from Caenorhabditis briggsae.